Consider the following 266-residue polypeptide: Putative carbamate hydrolase RutD (266 aa).

The AB hydrolase-1 domain maps to 14–115; the sequence is PVVVLISGLG…TMLVSVNGWL (102 aa).

The protein belongs to the AB hydrolase superfamily. Hydrolase RutD family.

It catalyses the reaction carbamate + 2 H(+) = NH4(+) + CO2. Its function is as follows. Involved in pyrimidine catabolism. May facilitate the hydrolysis of carbamate, a reaction that can also occur spontaneously. This chain is Putative carbamate hydrolase RutD, found in Shigella flexneri serotype 5b (strain 8401).